The primary structure comprises 290 residues: Nitrogenase iron protein 2 (290 aa).

Gly-10–Ser-17 is an ATP binding site. [4Fe-4S] cluster is bound at residue Cys-98. Arg-101 bears the ADP-ribosylarginine; by dinitrogenase reductase ADP-ribosyltransferase mark. Cys-133 provides a ligand contact to [4Fe-4S] cluster.

Belongs to the NifH/BchL/ChlL family. As to quaternary structure, homodimer. It depends on [4Fe-4S] cluster as a cofactor. The reversible ADP-ribosylation of Arg-101 inactivates the nitrogenase reductase and regulates nitrogenase activity.

It carries out the reaction N2 + 8 reduced [2Fe-2S]-[ferredoxin] + 16 ATP + 16 H2O = H2 + 8 oxidized [2Fe-2S]-[ferredoxin] + 2 NH4(+) + 16 ADP + 16 phosphate + 6 H(+). The key enzymatic reactions in nitrogen fixation are catalyzed by the nitrogenase complex, which has 2 components: the iron protein (component 2) and a component 1 which is either a molybdenum-iron protein, a vanadium-iron, or an iron-iron protein. The protein is Nitrogenase iron protein 2 (vnfH) of Azotobacter vinelandii.